The sequence spans 592 residues: MASQLSYLQQELLRALLESGVTKEALKKALADGDNYAYPNVPLDDIRNLDEGDNCVQLPNGLGEPQMSEDESSDDGGDFTPPIMKELERLSPEEAAHQKAVVERLLQEDPWHVAKLVKSYLQQHNIPQREVVDTTGLNQSHLSQHLNKGTPMKTQKRAALYAWYVGKQREIARQFTHAGHSMITDDMSCDDVPNKKMRRNRFKWGPASQQILFQAYERQKNPSKEEREALVEECNRAECLQRGVSPSQAQGLGSNLVTEVRVYNWFANSGKEEAFRHKLAMDTYNGQQSSAQPLSTHDLPHGKTPRYTQDSSTDRSAAMANSQSTLSPSALEPSHILMNSDSKMVPVSGGSLPPVSTLTALHSLDHSQHTLGQTQNLIMASLPSVMTIGTDSALGPAFSNPGSSTLVIGLASQTQSVPVINSVGSSLTTLQSVQFSQQLHPSHQQPIVQQVQSHMAQSPFMATMAQLQSPHALYSHKPEVAQYTSAGFFPQTMVITDTSNLGTLTSLTPSKQVVSHHPTAHGDSPGSQLHNQDSSILHLHPSHRLSPIPTVSSASLIHYHNSSSPENHSHLLSPSHNTIDSFISTQMASSSQ.

The segment at 1–31 is dimerization; that stretch reads MASQLSYLQQELLRALLESGVTKEALKKALA. The HNF-p1 domain maps to 1-32; sequence MASQLSYLQQELLRALLESGVTKEALKKALAD. Positions 54 to 78 are disordered; the sequence is NCVQLPNGLGEPQMSEDESSDDGGD. Residues 67-77 are compositionally biased toward acidic residues; sequence MSEDESSDDGG. Residues 85 to 180 enclose the POU-specific atypical domain; sequence KELERLSPEE…IARQFTHAGH (96 aa). 6 interaction with DNA regions span residues 128 to 130, 141 to 147, 153 to 156, 201 to 204, 261 to 263, and 268 to 271; these read QRE, HLSQHLN, KTQK, RFKW, RVY, and NSGK. The short motif at 195–203 is the Nuclear localization signal element; sequence KKMRRNRFK. Positions 197 to 277 form a DNA-binding region, homeobox; HNF1-type; sequence MRRNRFKWGP…NSGKEEAFRH (81 aa). Composition is skewed to polar residues over residues 284-295 and 306-328; these read YNGQQSSAQPLS and RYTQDSSTDRSAAMANSQSTLSP. Disordered stretches follow at residues 284–329 and 511–533; these read YNGQ…LSPS and KQVVSHHPTAHGDSPGSQLHNQD.

The protein belongs to the HNF1 homeobox family. Binds DNA as dimer. Forms a homodimer or heterodimer with HNF1-alpha-A. Potentially also form a heterodimer with HNF1-beta. Liver.

The protein localises to the nucleus. In terms of biological role, transcriptional activator that regulates the tissue specific expression of multiple genes, especially in pancreas and liver. Binds to the hepatocyte specific promoter element HP1. Binds to the inverted palindrome 5'-GTTAATNATTAAC-3'. The sequence is that of Hepatocyte nuclear factor 1-alpha-B (hnf1a-b) from Xenopus laevis (African clawed frog).